We begin with the raw amino-acid sequence, 123 residues long: Small ribosomal subunit protein uS13 (123 aa).

Residues 99 to 123 (RGQRTRTNARTRKGPRRTVGVKRKK) form a disordered region.

It belongs to the universal ribosomal protein uS13 family. In terms of assembly, part of the 30S ribosomal subunit. Forms a loose heterodimer with protein S19. Forms two bridges to the 50S subunit in the 70S ribosome.

Its function is as follows. Located at the top of the head of the 30S subunit, it contacts several helices of the 16S rRNA. In the 70S ribosome it contacts the 23S rRNA (bridge B1a) and protein L5 of the 50S subunit (bridge B1b), connecting the 2 subunits; these bridges are implicated in subunit movement. Contacts the tRNAs in the A and P-sites. This Carboxydothermus hydrogenoformans (strain ATCC BAA-161 / DSM 6008 / Z-2901) protein is Small ribosomal subunit protein uS13.